The sequence spans 150 residues: MSGSMATAEASGSDGKGQEVETSVTYYRLEEVAKRNSLKELWLVIHGRVYDVTRFLNEHPGGEEVLLEQAGVDASESFEDVGHSSDAREMLKQYYIGDIHPSDLKPESGSKDPSKNDTCKSCWAYWILPIIGAVLLGFLYRYYTSESKSS.

Positions 1-15 are excised as a propeptide; the sequence is MSGSMATAEASGSDG. The tract at residues 1–20 is disordered; that stretch reads MSGSMATAEASGSDGKGQEV. S23 carries the post-translational modification Phosphoserine. The region spanning 24 to 100 is the Cytochrome b5 heme-binding domain; it reads VTYYRLEEVA…LKQYYIGDIH (77 aa). An N6-acetyllysine modification is found at K34. S37 is subject to Phosphoserine. K39 bears the N6-methyllysine mark. Heme is bound by residues H59 and H83. S84 is subject to Phosphoserine. A helical transmembrane segment spans residues 123 to 140; the sequence is WAYWILPIIGAVLLGFLY.

This sequence belongs to the cytochrome b5 family. As to quaternary structure, component of a complex composed of cytochrome b5, NADH-cytochrome b5 reductase (CYB5R3) and MTARC2.

The protein localises to the mitochondrion outer membrane. In terms of biological role, cytochrome b5 is a membrane-bound hemoprotein functioning as an electron carrier for several membrane-bound oxygenases. The sequence is that of Cytochrome b5 type B (CYB5B) from Homo sapiens (Human).